Reading from the N-terminus, the 384-residue chain is MKRISILGVTGSIGTQTLDVLRFHKEDFELVGITANRNIELTMDIIKEFSPKYVAINHEESYKKLVDLVKSQGLKCEVIYGMEGLVKVATLDEIDIVVTSVVGMIGLKPTVEAIRKGKDIALANKETLVVAGELVMREAKENGVKILPVDSEHSAIFQSLQGNAHNKIDKILLTASGGPFRGFTIEDLKSVTPERALKHPKWNMGQKISIDSSTLMNKGLEVIEAHWLFDCPYKDIEVVVHPQSIIHSMVQYTDGAVIAQLGVPDMKLPIQYALNYPNRQGNISEKLDLFKIRELTFEKPDLDTFKCLKLAYEAGEKGKLMPTILNGANEVCVELFLNKKITYLQIPEIIEECMNTFDYNKEVTLHNVINLDKEVRQYIYEKYN.

Residues Thr-10, Gly-11, Ser-12, Ile-13, Arg-37, Asn-38, and Asn-124 each contribute to the NADPH site. Lys-125 is a binding site for 1-deoxy-D-xylulose 5-phosphate. Glu-126 serves as a coordination point for NADPH. Asp-150 contacts Mn(2+). 4 residues coordinate 1-deoxy-D-xylulose 5-phosphate: Ser-151, Glu-152, Ser-176, and His-199. Glu-152 is a Mn(2+) binding site. Gly-205 contacts NADPH. Positions 212, 217, 218, and 221 each coordinate 1-deoxy-D-xylulose 5-phosphate. Glu-221 serves as a coordination point for Mn(2+).

Belongs to the DXR family. Requires Mg(2+) as cofactor. Mn(2+) serves as cofactor.

The catalysed reaction is 2-C-methyl-D-erythritol 4-phosphate + NADP(+) = 1-deoxy-D-xylulose 5-phosphate + NADPH + H(+). It participates in isoprenoid biosynthesis; isopentenyl diphosphate biosynthesis via DXP pathway; isopentenyl diphosphate from 1-deoxy-D-xylulose 5-phosphate: step 1/6. Functionally, catalyzes the NADPH-dependent rearrangement and reduction of 1-deoxy-D-xylulose-5-phosphate (DXP) to 2-C-methyl-D-erythritol 4-phosphate (MEP). The protein is 1-deoxy-D-xylulose 5-phosphate reductoisomerase of Clostridium perfringens (strain ATCC 13124 / DSM 756 / JCM 1290 / NCIMB 6125 / NCTC 8237 / Type A).